A 119-amino-acid chain; its full sequence is uncharacterized protein (119 aa).

This is an uncharacterized protein from Ureaplasma parvum serovar 3 (strain ATCC 700970).